The chain runs to 262 residues: Small ribosomal subunit protein uS2 (262 aa).

Residues 223 to 262 form a disordered region; that stretch reads KSLLEQDGGEQAAGEEVSQDEKDAVVAEAMSEEDFGEDEE. Positions 227–238 are enriched in low complexity; the sequence is EQDGGEQAAGEE. Residues 252–262 are compositionally biased toward acidic residues; the sequence is MSEEDFGEDEE.

The protein belongs to the universal ribosomal protein uS2 family.

The protein is Small ribosomal subunit protein uS2 of Campylobacter concisus (strain 13826).